The sequence spans 270 residues: Undecaprenyl-diphosphatase 3 (270 aa).

The next 7 helical transmembrane spans lie at 5 to 25 (YYIL…PIPI), 42 to 62 (IEGF…VLLI), 89 to 109 (FFFI…GVLF), 117 to 137 (LKGV…LWII), 192 to 212 (FSFL…ITDI), 220 to 240 (TLFV…YISL), and 250 to 270 (GNLK…LIFL).

The protein belongs to the UppP family.

Its subcellular location is the cell membrane. It carries out the reaction di-trans,octa-cis-undecaprenyl diphosphate + H2O = di-trans,octa-cis-undecaprenyl phosphate + phosphate + H(+). Its function is as follows. Catalyzes the dephosphorylation of undecaprenyl diphosphate (UPP). Confers resistance to bacitracin. This is Undecaprenyl-diphosphatase 3 from Bacillus anthracis.